Consider the following 592-residue polypeptide: Craniofacial development protein 2 (592 aa).

Basic and acidic residues predominate over residues 1-16; it reads MEEFDSKDISTSKDED. Disordered stretches follow at residues 1-225 and 499-592; these read MEEF…KGQS and VTNE…DCNN. Acidic residues predominate over residues 25–42; it reads HEDDINELVKEDEVDGEE. Basic and acidic residues-rich tracts occupy residues 78-108 and 147-162; these read SRES…RQEE and KVEE…EVKL. Polar residues predominate over residues 175–184; that stretch reads LTQQGRLSGR. Composition is skewed to basic and acidic residues over residues 185-207, 508-523, 552-562, and 580-592; these read TSED…RRAD, EEAK…EKPE, SVFKQDEKDKP, and EKCD…DCNN. The hydrophilic stretch occupies residues 499-578; it reads VTNEEDATNE…SVPSLPAGSG (80 aa).

In terms of processing, phosphorylated by CK2 (casein kinase II) in vitro. As to expression, expressed in liver and lung with higher expression in brain.

It localises to the cytoplasm. Its subcellular location is the nucleus. The sequence is that of Craniofacial development protein 2 (CFDP2) from Bos taurus (Bovine).